The following is a 311-amino-acid chain: HPr kinase/phosphorylase (311 aa).

Active-site residues include His138 and Lys159. 153 to 160 is an ATP binding site; sequence GDSGIGKS. Mg(2+) is bound at residue Ser160. Residue Asp177 is the Proton acceptor; for phosphorylation activity. Proton donor; for dephosphorylation activity of the active site. The segment at 201-210 is important for the catalytic mechanism of both phosphorylation and dephosphorylation; it reads LEIRGVGIID. Residue Glu202 coordinates Mg(2+). Arg243 is an active-site residue. Positions 264–269 are important for the catalytic mechanism of dephosphorylation; that stretch reads PVKTGR.

The protein belongs to the HPrK/P family. As to quaternary structure, homohexamer. Requires Mg(2+) as cofactor.

It carries out the reaction [HPr protein]-L-serine + ATP = [HPr protein]-O-phospho-L-serine + ADP + H(+). The catalysed reaction is [HPr protein]-O-phospho-L-serine + phosphate + H(+) = [HPr protein]-L-serine + diphosphate. Catalyzes the ATP- as well as the pyrophosphate-dependent phosphorylation of a specific serine residue in HPr, a phosphocarrier protein of the phosphoenolpyruvate-dependent sugar phosphotransferase system (PTS). HprK/P also catalyzes the pyrophosphate-producing, inorganic phosphate-dependent dephosphorylation (phosphorolysis) of seryl-phosphorylated HPr (P-Ser-HPr). The two antagonistic activities of HprK/P are regulated by several intracellular metabolites, which change their concentration in response to the absence or presence of rapidly metabolisable carbon sources (glucose, fructose, etc.) in the growth medium. Therefore, by controlling the phosphorylation state of HPr, HPrK/P is a sensor enzyme that plays a major role in the regulation of carbon metabolism and sugar transport: it mediates carbon catabolite repression (CCR), and regulates PTS-catalyzed carbohydrate uptake and inducer exclusion. This Streptococcus sanguinis (strain SK36) protein is HPr kinase/phosphorylase.